Consider the following 357-residue polypeptide: ATP-dependent 6-phosphofructokinase (357 aa).

ATP contacts are provided by residues Gly12, 80–81, and 107–110; these read KG and GDGS. Mg(2+) is bound at residue Asp108. Substrate contacts are provided by residues 131-133, Arg168, 175-177, Glu229, Arg272, and 278-281; these read TID, MGR, and HIQR. Catalysis depends on Asp133, which acts as the Proton acceptor.

This sequence belongs to the phosphofructokinase type A (PFKA) family. Mixed-substrate PFK group III subfamily. Homodimer or homotetramer. Mg(2+) is required as a cofactor.

It localises to the cytoplasm. It catalyses the reaction beta-D-fructose 6-phosphate + ATP = beta-D-fructose 1,6-bisphosphate + ADP + H(+). It participates in carbohydrate degradation; glycolysis; D-glyceraldehyde 3-phosphate and glycerone phosphate from D-glucose: step 3/4. Subject to allosteric activation by ADP and other diphosphonucleosides, and inhibition by phosphoenolpyruvate. Its function is as follows. Catalyzes the phosphorylation of D-fructose 6-phosphate to fructose 1,6-bisphosphate by ATP, the first committing step of glycolysis. The chain is ATP-dependent 6-phosphofructokinase from Trichormus variabilis (strain ATCC 29413 / PCC 7937) (Anabaena variabilis).